Reading from the N-terminus, the 198-residue chain is CASP-like protein 2B1 (198 aa).

Residues 1–12 (MAAAMGLERKAK) lie on the Cytoplasmic side of the membrane. Residues 13-33 (VAEVALRCAVCALAALAAALV) traverse the membrane as a helical segment. The Extracellular segment spans residues 34 to 55 (GTGSQTRTFFSLEKKARFTDMK). A helical membrane pass occupies residues 56-76 (ALVLLVAAHGAAAVYSLLQLA). Over 77 to 91 (RCAAAAAWKGGSNGG) the chain is Cytoplasmic. A helical membrane pass occupies residues 92–112 (AAVVAWSVFSCDQAVAYALMA). Residues 113 to 149 (ATAAALQSSVVGKRGQPELQWMPVCGLYGAFCRRVGE) are Extracellular-facing. A helical transmembrane segment spans residues 150–170 (GLAAAVAAGLAAVLLAAVSAF). Residues 171–198 (NLFRLYGGGGGGRKSSAGAVSGNGANTW) are Cytoplasmic-facing.

It belongs to the Casparian strip membrane proteins (CASP) family. In terms of assembly, homodimer and heterodimers.

Its subcellular location is the cell membrane. In Oryza sativa subsp. japonica (Rice), this protein is CASP-like protein 2B1.